The chain runs to 308 residues: uncharacterized protein (308 aa).

The S4 RNA-binding domain occupies 15 to 81 (MRVDTGLARL…QNTPIDIEGM (67 aa)). Residue Asp139 is part of the active site.

It belongs to the pseudouridine synthase RluA family.

It catalyses the reaction a uridine in RNA = a pseudouridine in RNA. This is an uncharacterized protein from Mycobacterium tuberculosis (strain CDC 1551 / Oshkosh).